Here is a 335-residue protein sequence, read N- to C-terminus: Vitamin B12 import system permease protein BtuC (335 aa).

9 helical membrane-spanning segments follow: residues 21–43, 63–82, 95–114, 119–141, 153–175, 195–212, 244–266, 281–303, and 310–329; these read FLAI…GENW, FPRV…AGAV, GLLG…VLMF, PFWL…LLTF, LLVG…YFST, WRHQ…IWLS, FAVG…IGLV, TLLP…LSRL, and VPIG…WLLL.

It belongs to the binding-protein-dependent transport system permease family. FecCD subfamily. As to quaternary structure, the complex is composed of two ATP-binding proteins (BtuD), two transmembrane proteins (BtuC) and a solute-binding protein (BtuF).

The protein resides in the cell inner membrane. Functionally, part of the ABC transporter complex BtuCDF involved in vitamin B12 import. Involved in the translocation of the substrate across the membrane. This chain is Vitamin B12 import system permease protein BtuC, found in Photorhabdus laumondii subsp. laumondii (strain DSM 15139 / CIP 105565 / TT01) (Photorhabdus luminescens subsp. laumondii).